The sequence spans 342 residues: CMP-N-acetylneuraminate-beta-galactosamide-alpha-2,3-sialyltransferase 1 (342 aa).

The Cytoplasmic segment spans residues 1 to 10 (MVTVRKRNVK). A helical; Signal-anchor for type II membrane protein transmembrane segment spans residues 11-28 (VFTFAFVLITVTSFLLNY). The Lumenal segment spans residues 29–342 (KHQVTMTTWD…IEKIKFFKGR (314 aa)). 3 disulfide bridges follow: Cys61-Cys66, Cys63-Cys141, and Cys144-Cys283. Asn81 is a glycosylation site (N-linked (GlcNAc...) asparagine). Gln107 contacts substrate. The N-linked (GlcNAc...) asparagine glycan is linked to Asn116. 2 residues coordinate substrate: Asn149 and Asn172. Asn203 and Asn229 each carry an N-linked (GlcNAc...) asparagine glycan. Substrate is bound by residues Tyr232, Tyr268, Gly272, Gly292, and His301. Asn306 is a glycosylation site (N-linked (GlcNAc...) asparagine). Residue His318 coordinates substrate. An N-linked (GlcNAc...) asparagine glycan is attached at Asn325.

The protein belongs to the glycosyltransferase 29 family. Post-translationally, the soluble form derives from the membrane form by proteolytic processing.

It localises to the golgi apparatus. The protein resides in the golgi stack membrane. The protein localises to the secreted. The enzyme catalyses a beta-D-galactosyl-(1-&gt;3)-N-acetyl-alpha-D-galactosaminyl derivative + CMP-N-acetyl-beta-neuraminate = an N-acetyl-alpha-neuraminyl-(2-&gt;3)-beta-D-galactosyl-(1-&gt;3)-N-acetyl-alpha-D-galactosaminyl derivative + CMP + H(+). The protein operates within protein modification; protein glycosylation. Its function is as follows. Responsible for the synthesis of the sequence NeuAc-alpha-2,3-Gal-beta-1,3-GalNAc- found on sugar chains O-linked to Thr or Ser and also as a terminal sequence on certain gangliosides. SIAT4A and SIAT4B sialylate the same acceptor substrates but exhibit different Km values. This is CMP-N-acetylneuraminate-beta-galactosamide-alpha-2,3-sialyltransferase 1 (ST3GAL1) from Gallus gallus (Chicken).